A 424-amino-acid chain; its full sequence is Probable methyltransferase EP424R (424 aa).

An Adrift-type SAM-dependent 2'-O-MTase domain is found at 103–315; that stretch reads QIVTNAWLKM…TYIVGKNRLR (213 aa). S-adenosyl-L-methionine-binding residues include Gly-135 and Asp-228. Lys-268 serves as the catalytic Proton acceptor.

Its subcellular location is the virion. The polypeptide is Probable methyltransferase EP424R (Ornithodoros (relapsing fever ticks)).